Here is a 993-residue protein sequence, read N- to C-terminus: Chromosome transmission fidelity protein 18 homolog (993 aa).

The disordered stretch occupies residues 26-72 (PDEFNAYDGPSTSKQAAEKQKENRAPVAALRDSTRLGNSTLGSPQLS). The segment covering 60-72 (RLGNSTLGSPQLS) has biased composition (polar residues). 427-434 (GPPGLGKT) provides a ligand contact to ATP. A disordered region spans residues 892–913 (AAPKGGAPSAPAAKKKTSGAAA). The segment covering 894-913 (PKGGAPSAPAAKKKTSGAAA) has biased composition (low complexity).

It belongs to the activator 1 small subunits family. CTF18 subfamily. As to quaternary structure, component of the CTF18-RFC complex.

The protein localises to the nucleus. Functionally, chromosome cohesion factor involved in sister chromatid cohesion and fidelity of chromosome transmission. Component of one of the cell nuclear antigen loader complexes, CTF18-replication factor C (CTF18-RFC). The CTF18-RFC complex catalyzes the ATP-dependent loading of PCNA onto primed and gapped DNA and has weak ATPase activity. The CTF18-RFC complex catalyzes the ATP-dependent loading of PCNA onto primed and gapped DNA. This is Chromosome transmission fidelity protein 18 homolog from Drosophila melanogaster (Fruit fly).